A 186-amino-acid chain; its full sequence is MSYLTKYIDYFKSFTIMENPTESSRRDMEILVKNISSSLTTFTRDPIGMVVSSLMLLLVYFCFATTFIYKGISLFIPSYCIYHVLNSNTNQEVKYKNILTYFFIYSHIEFISDILETVGFGLLHLKIALVIVLLYTVHYRNEWLEMIYNKIVYFDTIGFYTLFFTYSRLIQEYNKFRQTVKIKKNE.

N-linked (GlcNAc...) asparagine; by host glycosylation occurs at N34. The next 3 helical transmembrane spans lie at 47–67 (IGMV…ATTF), 114–134 (ILET…IVLL), and 144–164 (LEMI…TLFF).

It localises to the membrane. This is an uncharacterized protein from Acanthamoeba polyphaga mimivirus (APMV).